The primary structure comprises 279 residues: Protein phosphatase 1 regulatory subunit 3E (279 aa).

Ser-16 and Ser-33 each carry phosphoserine. Residues 28–86 (RSQRPSLEEEPEEEPGEGGTRFGARSRAHAPSRGRRARSAPAGGGGARAPRSRSPDTRK) are disordered. The segment covering 51–65 (ARSRAHAPSRGRRAR) has biased composition (basic residues). Ser-66 is modified (phosphoserine). The PP1-binding motif motif lies at 87–90 (RVRF). The region spanning 154 to 259 (AARLLTQRIC…NNGGRDYALR (106 aa)) is the CBM21 domain. The interval 176-198 (GSARVVDLAYEKRVSVRWSADGW) is glycogen-binding motif. Positions 248-256 (WDNNGGRDY) are substrate-binding motif.

As to expression, expressed in skeletal muscle and heart with barely detectable levels in liver.

Functionally, acts as a glycogen-targeting subunit for PP1. PP1 is involved in glycogen metabolism and contributes to the activation of glycogen synthase leading to an increase in glycogen synthesis. This is Protein phosphatase 1 regulatory subunit 3E (PPP1R3E) from Homo sapiens (Human).